Reading from the N-terminus, the 367-residue chain is MANRGDLQKKTHTKKRPLHNIYGKEILSKRLEAENFPRTTLSFYRYVILENVQELRNRLYVEWEALGVLGRIYVAREGINAQLSIPSHNLNSFKENLNSRIQFKDMLLKIAVEDDHRSFLKLDLKVRNKIVADGLNDDAFDVTNVGKHLSAEEFNRCMEDKNSIVVDVRNHYESEIGHFENAILPQSDTFREELQILLELLNGKEDHKILMYCTGGIRCEKASAWLKHHGFKDVNQLHGGIISYAHEISQKGLESKFRGKNFVFDGRLQETIGNEIISVCHQCGKKSDRHINCSNPGCHILFIQCDDCSEKFEGCCTEECKTVLHLPKEKQKEIRKGKSNENRFFTKSKIRPKISELYRNRKPFETA.

The Rhodanese domain maps to 159–249; the sequence is EDKNSIVVDV…GIISYAHEIS (91 aa). Cysteine 213 (cysteine persulfide intermediate) is an active-site residue.

Belongs to the TrhO family.

It catalyses the reaction uridine(34) in tRNA + AH2 + O2 = 5-hydroxyuridine(34) in tRNA + A + H2O. In terms of biological role, catalyzes oxygen-dependent 5-hydroxyuridine (ho5U) modification at position 34 in tRNAs. The polypeptide is tRNA uridine(34) hydroxylase (Leptospira borgpetersenii serovar Hardjo-bovis (strain L550)).